We begin with the raw amino-acid sequence, 266 residues long: RNA polymerase II subunit A C-terminal domain phosphatase ssu-72 (266 aa).

The disordered stretch occupies residues 1–31 (MSAVDTPTGAASSSKPDQNEQNGQNGGREDS). The segment covering 9-23 (GAASSSKPDQNEQNG) has biased composition (polar residues).

The protein belongs to the SSU72 phosphatase family. In terms of assembly, component of the cleavage and polyadenylation factor (CPF) complex.

It localises to the nucleus. The enzyme catalyses O-phospho-L-seryl-[protein] + H2O = L-seryl-[protein] + phosphate. The catalysed reaction is O-phospho-L-threonyl-[protein] + H2O = L-threonyl-[protein] + phosphate. Its function is as follows. Processively dephosphorylates Ser-5 of the heptad repeats YSPTSPS in the C-terminal domain of the largest RNA polymerase II subunit (rpb-1). Component of the cleavage and polyadenylation factor (CPF) complex, which plays a key role in polyadenylation-dependent pre-mRNA 3'-end formation and cooperates with cleavage factors including the CFIA complex and NAB4/CFIB. Ssu-72 is required for 3'-end formation of snoRNAs. The chain is RNA polymerase II subunit A C-terminal domain phosphatase ssu-72 (ssu-72) from Neurospora crassa (strain ATCC 24698 / 74-OR23-1A / CBS 708.71 / DSM 1257 / FGSC 987).